A 147-amino-acid chain; its full sequence is Small ribosomal subunit protein uS12 (147 aa).

Belongs to the universal ribosomal protein uS12 family. In terms of assembly, part of the 30S ribosomal subunit.

With S4 and S5 plays an important role in translational accuracy. Located at the interface of the 30S and 50S subunits. The sequence is that of Small ribosomal subunit protein uS12 from Methanococcus vannielii (strain ATCC 35089 / DSM 1224 / JCM 13029 / OCM 148 / SB).